The chain runs to 219 residues: Probable GTP-binding protein EngB (219 aa).

The 184-residue stretch at 24–207 folds into the EngB-type G domain; that stretch reads VQPEIAFAGR…HELIESWLRP (184 aa). GTP-binding positions include 32–39, 59–63, 81–84, 148–151, and 186–188; these read GRSNAGKS, GRTQH, DLPG, TKCD, and FSA. The Mg(2+) site is built by serine 39 and threonine 61.

It belongs to the TRAFAC class TrmE-Era-EngA-EngB-Septin-like GTPase superfamily. EngB GTPase family. The cofactor is Mg(2+).

Functionally, necessary for normal cell division and for the maintenance of normal septation. The chain is Probable GTP-binding protein EngB from Burkholderia ambifaria (strain ATCC BAA-244 / DSM 16087 / CCUG 44356 / LMG 19182 / AMMD) (Burkholderia cepacia (strain AMMD)).